Here is a 694-residue protein sequence, read N- to C-terminus: Type VI secretion system spike protein VgrG2 (694 aa).

It belongs to the VgrG protein family.

It localises to the secreted. Functionally, part of the type VI secretion system specialized secretion system, which delivers several virulence factors in both prokaryotic and eukaryotic cells during infection. Forms the spike at the tip of the elongating tube formed by haemolysin co-regulated protein Hcp. Allows the delivery of the VasX antibacterial toxin to target cells where it exerts its toxicity. The sequence is that of Type VI secretion system spike protein VgrG2 (vgrG2) from Vibrio cholerae serotype O1 (strain ATCC 39315 / El Tor Inaba N16961).